A 331-amino-acid chain; its full sequence is MEKAFRPHFFNHGKPDANPKEKKNCHWCQIRSFATHAQLPISIVNREDDAFLNPNFRFIDHSIIGKNVPVADQSFRVGCSCASDEECMYSTCQCLDEMAPDSDEEADPYTRKKRFAYYSQGAKKGLLRDRVLQSQEPIYECHQGCACSKDCPNRVVERGRTVPLQIFRTKDRGWGVKCPVNIKRGQFVDRYLGEIITSEEADRRRAESTIARRKDVYLFALDKFSDPDSLDPLLAGQPLEVDGEYMSGPTRFINHSCDPNMAIFARVGDHADKHIHDLALFAIKDIPKGTELTFDYVNGLTGLESDAHDPSKISEMTKCLCGTAKCRGYLW.

Positions 77-159 constitute a Pre-SET domain; it reads VGCSCASDEE…DCPNRVVERG (83 aa). Residues Cys-79, Cys-81, Cys-87, Cys-92, Cys-94, Cys-141, Cys-145, Cys-147, and Cys-151 each coordinate Zn(2+). In terms of domain architecture, SET spans 162-297; the sequence is VPLQIFRTKD…KGTELTFDYV (136 aa). S-adenosyl-L-methionine-binding positions include 172–174, Asp-215, Tyr-217, Arg-251, and 254–255; these read RGW and NH. 4 residues coordinate Zn(2+): Cys-257, Cys-319, Cys-321, and Cys-326. Positions 315 to 331 constitute a Post-SET domain; the sequence is EMTKCLCGTAKCRGYLW.

Belongs to the class V-like SAM-binding methyltransferase superfamily. Histone-lysine methyltransferase family. Suvar3-9 subfamily.

It localises to the nucleus. The protein resides in the chromosome. The enzyme catalyses L-lysyl(9)-[histone H3] + 3 S-adenosyl-L-methionine = N(6),N(6),N(6)-trimethyl-L-lysyl(9)-[histone H3] + 3 S-adenosyl-L-homocysteine + 3 H(+). Histone methyltransferase that specifically trimethylates histone H3 to form H3K9me3. H3K9me3 marks chromatin regions for DNA methylation. Dim-5 recognizes Arg-8 to Gly-12 of the H3 tail with Thr-11 and Gly-12 being the most important specificity determinants, the recognition of whcih is important to distinguish H3K9 from H3K27 and H4K20. This is Histone-lysine N-methyltransferase, H3 lysine-9 specific dim-5 (dim-5) from Neurospora crassa (strain ATCC 24698 / 74-OR23-1A / CBS 708.71 / DSM 1257 / FGSC 987).